Consider the following 217-residue polypeptide: Growth factor receptor-bound protein 2 (217 aa).

Met1 carries the post-translational modification N-acetylmethionine. An SH3 1 domain is found at 1–58 (MEAIAKYDFKATADDELSFKRGDILKVLNEECDQNWYKAELNGKDGFIPKNYIEMKPH). Residues Lys6, Lys50, and Lys109 each carry the N6-acetyllysine modification. One can recognise an SH2 domain in the interval 60–152 (WFFGKIPRAK…NQQIFLRDIE (93 aa)). Lys109 participates in a covalent cross-link: Glycyl lysine isopeptide (Lys-Gly) (interchain with G-Cter in ubiquitin). Residues 156-215 (QQPTYVQALFDFDPQEDGELGFRRGDFIHVMDNSDPNWWKGACHGQTGMFPRNYVTPVNR) enclose the SH3 2 domain. Phosphotyrosine is present on Tyr209. Thr211 bears the Phosphothreonine mark.

Belongs to the GRB2/sem-5/DRK family. Homodimer. Associates (via SH2 domain) with activated EGF and PDGF receptors (tyrosine phosphorylated). Interacts with PDGFRA (tyrosine phosphorylated); the interaction may be indirect. Also associates to other cellular Tyr-phosphorylated proteins such as SIT1, IRS1, IRS2, IRS4, SHC and LNK; probably via the concerted action of both its SH2 and SH3 domains. It also seems to interact with RAS in the signaling pathway leading to DNA synthesis. Interacts with SOS1. Forms a complex with MUC1 and SOS1, through interaction of the SH3 domains with SOS1 and the SH2 domain with phosphorylated MUC1. Interacts with phosphorylated MET. Interacts with phosphorylated TOM1L1. Interacts with the phosphorylated C-terminus of SH2B2. Interacts with phosphorylated SIT1, LAX1, LAT, LAT2 and LIME1 upon TCR and/or BCR activation. Interacts with NISCH, PTPNS1 and REPS2. Interacts with syntrophin SNTA1. Interacts (via SH3 domains) with REPS1. Interacts (via SH3 domains) with PIK3C2B. Interacts with CBL and CBLB. Interacts with AJUBA and CLNK. Interacts (via SH2 domain) with TEK/TIE2 (tyrosine phosphorylated). Interacts with SHB, INPP5D/SHIP1, SKAP1 and SKAP2. Interacts with PTPN11. Interacts with PRNP. Interacts with RALGPS1. Interacts with HCST. Interacts with KDR. Interacts with FLT1 (tyrosine-phosphorylated). Interacts with GAPT and PTPRE. Interacts (via SH2 domain) with KIF26A. Interacts (via SH3 2) with GAB2. Interacts with ADAM15. Interacts with THEMIS2. Interacts (via SH2 domain) with AXL (phosphorylated). Interacts (via SH2 domain) with KIT (phosphorylated). Interacts with PTPRJ and BCR. Interacts with PTPN23. Interacts with FLT4 (tyrosine phosphorylated). Interacts with EPHB1 and SHC1; activates the MAPK/ERK cascade to regulate cell migration. Part of a complex including TNK2, GRB2, LTK and one receptor tyrosine kinase (RTK) such as AXL and PDGFRL, in which GRB2 promotes RTK recruitment by TNK2. Interacts (via SH2 domain) with CSF1R (tyrosine phosphorylated). Interacts with ERBB4. Interacts with NTRK1 (phosphorylated upon ligand-binding). Interacts with PTK2/FAK1 (tyrosine phosphorylated). Interacts with PTK2B/PYK2 (tyrosine phosphorylated). Interacts (via SH3 domains) with GAREM1 isoform 1 (via proline-rich domain and tyrosine phosphorylated); the interaction occurs upon EGF stimulation. Interacts with DAB2. Interacts with TESPA1. Interacts with PLCG1, LAT and THEMIS upon TCR activation in thymocytes; the association is weaker in the absence of TESPA1. Interacts with CD28. Interacts with RAB13; may recruit RAB13 to the leading edge of migrating endothelial cells where it can activate RHOA. Interacts with ASAP3 (phosphorylated form). Interacts (via SH2 domain) with PTPRH (phosphorylated form). Interacts with PTPRO (phosphorylated form). Interacts with PTPRB (phosphorylated form). Interacts (via SH3 domain 2) with PRR14 (via proline-rich region). Interacts with FCRL6 (tyrosine phosphorylated form). Interacts with RHEX (via tyrosine-phosphorylated form). Interacts with DENND2B. Interacts with SPRY2. Interacts with LRRC8A. Interacts with PEAK1. Interacts with CD28. Interacts with FCRL1. Interacts with PCNA. Interacts with CD19. Interacts with BECN1. Interacts with RAD51; the interaction inhibits RAD51 ATPase to stabilize RAD51-DNA complex at stalled replication forks. Interacts with MRE11; this interaction recruits MRE11 to the DNA damage sites. Interacts with RIPK1 ans SQSTM1; these interactions play a critical role in regulating programmed necrosis. Interacts with AGO2; this interaction is important for the formation of a ternary complex containing GRB2, AGO2 and DICER1. Interacts with TIGIT; this interaction inhibits PI3K and MAPK signaling cascades. Interacts with CD226; this interaction leads to activation of VAV1, PI3K and PLCG1. In terms of assembly, interacts (via SH2-domain) with SCIMP; this interaction is dependent on phosphorylation of SCIMP 'Tyr-69'. As to quaternary structure, interacts with SOS1; this interaction competes with GRB2 to bind SOS1 via its N-terminal SH3 domain. (Microbial infection) Interacts (via SH3 domain) with hepatitis E virus/HEV ORF3 protein. In terms of assembly, (Microbial infection) Interacts with hepatitis C virus/HCV protein NS5A via its SH3 domains. As to quaternary structure, (Microbial infection) Interacts with herpes simplex virus 1 protein UL46. (Microbial infection) Interacts with B19 parvovirus protein 11K. Phosphorylation of Tyr-209 in the C-terminal SH3 domain reduces its binding to SOS1. Post-translationally, ubiquitinated by RNF173, leading to proteasomal degradation and inhibition of the RAF/MEK/ERK pathway. In the nucleus, polyubiquitinated by RBBP6 at Lys-109 at DNA damage sites.

Its subcellular location is the nucleus. It localises to the cytoplasm. The protein localises to the endosome. It is found in the golgi apparatus. In terms of biological role, non-enzymatic adapter protein that plays a pivotal role in precisely regulated signaling cascades from cell surface receptors to cellular responses, including signaling transduction and gene expression. Thus, participates in many biological processes including regulation of innate and adaptive immunity, autophagy, DNA repair or necroptosis. Controls signaling complexes at the T-cell antigen receptor to facilitate the activation, differentiation, and function of T-cells. Mechanistically, engagement of the TCR leads to phosphorylation of the adapter protein LAT, which serves as docking site for GRB2. In turn, GRB2 establishes a a connection with SOS1 that acts as a guanine nucleotide exchange factor and serves as a critical regulator of KRAS/RAF1 leading to MAPKs translocation to the nucleus and activation. Functions also a role in B-cell activation by amplifying Ca(2+) mobilization and activation of the ERK MAP kinase pathway upon recruitment to the phosphorylated B-cell antigen receptor (BCR). Plays a role in switching between autophagy and programmed necrosis upstream of EGFR by interacting with components of necrosomes including RIPK1 and with autophagy regulators SQSTM1 and BECN1. Regulates miRNA biogenesis by forming a functional ternary complex with AGO2 and DICER1. Functions in the replication stress response by protecting DNA at stalled replication forks from MRE11-mediated degradation. Mechanistically, inhibits RAD51 ATPase activity to stabilize RAD51 on stalled replication forks. Additionally, directly recruits and later releases MRE11 at DNA damage sites during the homology-directed repair (HDR) process. Does not bind to phosphorylated epidermal growth factor receptor (EGFR) but inhibits EGF-induced transactivation of a RAS-responsive element. Acts as a dominant negative protein over GRB2 and by suppressing proliferative signals, may trigger active programmed cell death. Mechanistically, inhibits RAS-ERK signaling and downstream cell proliferation by competing with GRB2 for SOS1 binding and thus by regulating SOS1 membrane recruitment. This chain is Growth factor receptor-bound protein 2 (GRB2), found in Homo sapiens (Human).